Consider the following 121-residue polypeptide: MGQVLSICSSKSKEKKVVNEKPTVKPKPAVNVQKPAKAITKASSPPRTGRKLAETGNTSNKEHLSPTEAARVAAEKRNIEKKKGNGKLGRQLEKERAKPMKEHLQDISTQRQQEREQIKWD.

The interval 1-121 is disordered; it reads MGQVLSICSS…QQEREQIKWD (121 aa). G2 is lipidated: N-myristoyl glycine. C8 carries S-palmitoyl cysteine lipidation. Composition is skewed to basic and acidic residues over residues 11 to 23, 73 to 83, 90 to 105, and 112 to 121; these read KSKE…EKPT, AAEKRNIEKKK, RQLE…EHLQ, and QQEREQIKWD.

It to yeast YGL108C. Myristoylated. In terms of processing, the N-myristoylated protein is further palmitoylated.

The protein resides in the cytoplasm. The protein localises to the cytosol. This is an uncharacterized protein from Schizosaccharomyces pombe (strain 972 / ATCC 24843) (Fission yeast).